We begin with the raw amino-acid sequence, 327 residues long: tRNA dimethylallyltransferase (327 aa).

Residue 18 to 25 (GPTASGKT) coordinates ATP. Substrate is bound at residue 20 to 25 (TASGKT). Interaction with substrate tRNA stretches follow at residues 43–46 (DSAL), 167–171 (QRVQR), and 251–256 (RCVGYR).

It belongs to the IPP transferase family. As to quaternary structure, monomer. It depends on Mg(2+) as a cofactor.

It carries out the reaction adenosine(37) in tRNA + dimethylallyl diphosphate = N(6)-dimethylallyladenosine(37) in tRNA + diphosphate. Functionally, catalyzes the transfer of a dimethylallyl group onto the adenine at position 37 in tRNAs that read codons beginning with uridine, leading to the formation of N6-(dimethylallyl)adenosine (i(6)A). The protein is tRNA dimethylallyltransferase of Methylibium petroleiphilum (strain ATCC BAA-1232 / LMG 22953 / PM1).